The sequence spans 260 residues: Voltage-dependent calcium channel gamma-6 subunit (260 aa).

4 helical membrane-spanning segments follow: residues 43 to 63 (LLVAIVGATLAVLAVGTEFWV), 143 to 163 (VIAVLGLTAMALGCLCVIMVL), 169 to 189 (FLLRLGAVCFGLSGLLLFVSL), and 221 to 241 (LGCGVGAGLILLLGGVCFLLL).

The protein belongs to the PMP-22/EMP/MP20 family. CACNG subfamily. Interacts with CACNA1C. Identified in a complex with the L-type calcium channel subunits CACNA1C, CACNA2D1 and either CACNB1 or CACNB2. Detected in heart atrium and ventricle, aorta and skeletal muscle. Detected in heart left ventricle.

Its subcellular location is the cell membrane. Regulates the activity of L-type calcium channels that contain CACNA1C as pore-forming subunit. This is Voltage-dependent calcium channel gamma-6 subunit (Cacng6) from Rattus norvegicus (Rat).